We begin with the raw amino-acid sequence, 478 residues long: MKEFWQTCVSRLEQELPPQQISAWIRPLVPLAYDETQAVLRVAAPNRFKLDWVRKNFSHQIEALAAEWFQRPVQVAFELPAGGAGPRMPAVPRTPAGAPAPVSAGMAATPAGAPAQAPVAPAAVAAAVQADAAGVVYERSRLNTDLTFDNFVTGKANQLARAAALQVAENPGISYNPLFLYGGVGLGKTHLIHAIGNAMVAAGTGVRVRYVHADQYVSDVVKAYQRKAFDDFKRYYHSLDLLLIDDIQFFSGKSRTQEEFFYAFEAMVAQRKQIIITSDTYPKELAGIDSRLISRFDSGLTVAIEPPELEMRVAILLRKAESEGVPMPEEVAFFIAKHLRSNVRELEGALRKVLAYARFHGRDVLSVDVCKEALKDLLSVSNGQITVENIQKTVADFYKIKVADMYSKRRPANIALPRQVAMYLAKELTQKSLPEIGDLFGGRDHTTVLHAVRKISDARAKQAELNHTLHVLEQTLKG.

Positions 1-71 (MKEFWQTCVS…EALAAEWFQR (71 aa)) are domain I, interacts with DnaA modulators. A domain II region spans residues 71–140 (RPVQVAFELP…DAAGVVYERS (70 aa)). The domain III, AAA+ region stretch occupies residues 141-357 (RLNTDLTFDN…GALRKVLAYA (217 aa)). G185, G187, K188, and T189 together coordinate ATP. Positions 358-478 (RFHGRDVLSV…LHVLEQTLKG (121 aa)) are domain IV, binds dsDNA.

This sequence belongs to the DnaA family. In terms of assembly, oligomerizes as a right-handed, spiral filament on DNA at oriC.

The protein resides in the cytoplasm. Plays an essential role in the initiation and regulation of chromosomal replication. ATP-DnaA binds to the origin of replication (oriC) to initiate formation of the DNA replication initiation complex once per cell cycle. Binds the DnaA box (a 9 base pair repeat at the origin) and separates the double-stranded (ds)DNA. Forms a right-handed helical filament on oriC DNA; dsDNA binds to the exterior of the filament while single-stranded (ss)DNA is stabiized in the filament's interior. The ATP-DnaA-oriC complex binds and stabilizes one strand of the AT-rich DNA unwinding element (DUE), permitting loading of DNA polymerase. After initiation quickly degrades to an ADP-DnaA complex that is not apt for DNA replication. Binds acidic phospholipids. This chain is Chromosomal replication initiator protein DnaA, found in Bordetella petrii (strain ATCC BAA-461 / DSM 12804 / CCUG 43448).